Reading from the N-terminus, the 272-residue chain is Shikimate dehydrogenase (NADP(+)) (272 aa).

Shikimate-binding positions include 14–16 (SKS) and Thr-61. Lys-65 (proton acceptor) is an active-site residue. Glu-77 lines the NADP(+) pocket. Residues Asn-86 and Asp-102 each coordinate shikimate. NADP(+) contacts are provided by residues 126–130 (GAGGA), 149–154 (NRTASR), and Met-213. Tyr-215 provides a ligand contact to shikimate. An NADP(+)-binding site is contributed by Gly-237.

It belongs to the shikimate dehydrogenase family. In terms of assembly, homodimer.

The enzyme catalyses shikimate + NADP(+) = 3-dehydroshikimate + NADPH + H(+). It participates in metabolic intermediate biosynthesis; chorismate biosynthesis; chorismate from D-erythrose 4-phosphate and phosphoenolpyruvate: step 4/7. Functionally, involved in the biosynthesis of the chorismate, which leads to the biosynthesis of aromatic amino acids. Catalyzes the reversible NADPH linked reduction of 3-dehydroshikimate (DHSA) to yield shikimate (SA). This chain is Shikimate dehydrogenase (NADP(+)), found in Salmonella heidelberg (strain SL476).